We begin with the raw amino-acid sequence, 507 residues long: Protein phosphatase 1J (507 aa).

2 disordered regions span residues M1–W102 and L197–C220. A compositionally biased stretch (low complexity) spans S14–S23. At T41 the chain carries Phosphothreonine. Residues T59–Q73 are compositionally biased toward polar residues. Phosphoserine occurs at positions 65 and 75. The 397-residue stretch at S103–L499 folds into the PPM-type phosphatase domain. Over residues L199 to S212 the composition is skewed to low complexity.

It belongs to the PP2C family. Interacts with UBE2I/UBC9. As to expression, specifically expressed in the testicular germ cells.

The catalysed reaction is O-phospho-L-seryl-[protein] + H2O = L-seryl-[protein] + phosphate. It carries out the reaction O-phospho-L-threonyl-[protein] + H2O = L-threonyl-[protein] + phosphate. The sequence is that of Protein phosphatase 1J (Ppm1j) from Mus musculus (Mouse).